Consider the following 453-residue polypeptide: GTPase Der (453 aa).

EngA-type G domains lie at 4–169 (PIVA…PTQG) and 177–352 (TKIA…NEYQ). GTP is bound by residues 10 to 17 (GRPNVGKS), 57 to 61 (DTGGL), 120 to 123 (NKCE), 183 to 190 (GRPNVGKS), 230 to 234 (DTAGI), and 295 to 298 (NKWD). The KH-like domain occupies 353 to 438 (RRVTTSVINE…PIRLLWRGKK (86 aa)).

This sequence belongs to the TRAFAC class TrmE-Era-EngA-EngB-Septin-like GTPase superfamily. EngA (Der) GTPase family. As to quaternary structure, associates with the 50S ribosomal subunit.

GTPase that plays an essential role in the late steps of ribosome biogenesis. In Trichodesmium erythraeum (strain IMS101), this protein is GTPase Der.